A 318-amino-acid polypeptide reads, in one-letter code: Pantothenate kinase (318 aa).

96-103 contacts ATP; sequence GSVAVGKS.

It belongs to the prokaryotic pantothenate kinase family.

It is found in the cytoplasm. The catalysed reaction is (R)-pantothenate + ATP = (R)-4'-phosphopantothenate + ADP + H(+). The protein operates within cofactor biosynthesis; coenzyme A biosynthesis; CoA from (R)-pantothenate: step 1/5. This chain is Pantothenate kinase, found in Rhodopseudomonas palustris (strain BisB5).